Reading from the N-terminus, the 311-residue chain is MYTQGNPKLWTGRLDSETDPKQFRHFQTVKFANLENMENVSDKTGVGLLGYAVDKGVENNKGRIGSRKGPDIIKHEFAKLPDLSECEMLIDYGNVEHTSNHLRETQQEMARLSAKVIKQHKQAFLIGGGHDIAYAQYLATREVYSDASIGIINIDAHFDTRPDEPPTSGTMFREILDNDENVDYLVLGLAQGGNTRALYDYAKDNNIIYVYADELLHQVSPTIKDKIERFIHDHDTIMFTICMDVIDSAFAPGVSSPSVLGLYPHSVFEISKRVILSDKVSSISIAETNPDYDVDNRTSKLAANLIHHFLV.

Mn(2+) contacts are provided by histidine 130, aspartate 155, histidine 157, aspartate 159, cysteine 242, and aspartate 244.

This sequence belongs to the arginase family. It depends on Mn(2+) as a cofactor.

The catalysed reaction is N-formimidoyl-L-glutamate + H2O = formamide + L-glutamate. The protein operates within amino-acid degradation; L-histidine degradation into L-glutamate; L-glutamate from N-formimidoyl-L-glutamate (hydrolase route): step 1/1. In terms of biological role, catalyzes the conversion of N-formimidoyl-L-glutamate to L-glutamate and formamide. The polypeptide is Formimidoylglutamase (Staphylococcus haemolyticus (strain JCSC1435)).